The primary structure comprises 373 residues: Dual-specificity RNA methyltransferase RlmN (373 aa).

Catalysis depends on Glu-94, which acts as the Proton acceptor. The Radical SAM core domain occupies 100 to 339; that stretch reads EDDRATLCVS…VIVRKTRGDD (240 aa). A disulfide bond links Cys-107 and Cys-344. Residues Cys-114, Cys-118, and Cys-121 each coordinate [4Fe-4S] cluster. Residues 168 to 169, Ser-200, 222 to 224, and Asn-301 contribute to the S-adenosyl-L-methionine site; these read GE and SIH. Cys-344 acts as the S-methylcysteine intermediate in catalysis.

It belongs to the radical SAM superfamily. RlmN family. The cofactor is [4Fe-4S] cluster.

The protein resides in the cytoplasm. It catalyses the reaction adenosine(2503) in 23S rRNA + 2 reduced [2Fe-2S]-[ferredoxin] + 2 S-adenosyl-L-methionine = 2-methyladenosine(2503) in 23S rRNA + 5'-deoxyadenosine + L-methionine + 2 oxidized [2Fe-2S]-[ferredoxin] + S-adenosyl-L-homocysteine. The enzyme catalyses adenosine(37) in tRNA + 2 reduced [2Fe-2S]-[ferredoxin] + 2 S-adenosyl-L-methionine = 2-methyladenosine(37) in tRNA + 5'-deoxyadenosine + L-methionine + 2 oxidized [2Fe-2S]-[ferredoxin] + S-adenosyl-L-homocysteine. Its function is as follows. Specifically methylates position 2 of adenine 2503 in 23S rRNA and position 2 of adenine 37 in tRNAs. m2A2503 modification seems to play a crucial role in the proofreading step occurring at the peptidyl transferase center and thus would serve to optimize ribosomal fidelity. The polypeptide is Dual-specificity RNA methyltransferase RlmN (Shewanella sp. (strain W3-18-1)).